The following is a 285-amino-acid chain: Iron uptake system component EfeM (285 aa).

The N-terminal stretch at 1 to 34 (MTYPLLTRKTLMKKTPLALLLTLGLLQTPLAAFA) is a signal peptide.

This sequence belongs to the EfeM/EfeO family. In terms of assembly, component of the iron transporter efeUOB/M complex composed of EfeU, EfeM and EfeB.

The protein resides in the periplasm. Its function is as follows. Part of the iron transporter system efeUOB/M involved in iron import. Specifically binds Fe(3+), which is produced by EfeB-mediated oxidation of Fe(2+), and delivers it to the cell inner membrane permease EfeU. Also binds Zn(2+) and Cu(2+) in vitro. The polypeptide is Iron uptake system component EfeM (Pseudomonas syringae pv. syringae (strain B728a)).